We begin with the raw amino-acid sequence, 106 residues long: L-rhamnose mutarotase (106 aa).

Position 20 (Tyr-20) interacts with substrate. His-24 (proton donor) is an active-site residue. Substrate-binding positions include Tyr-43 and 78 to 79; that span reads WW.

This sequence belongs to the rhamnose mutarotase family. As to quaternary structure, homodimer.

The protein localises to the cytoplasm. It carries out the reaction alpha-L-rhamnose = beta-L-rhamnose. It functions in the pathway carbohydrate degradation; L-rhamnose degradation. In terms of biological role, involved in the anomeric conversion of L-rhamnose. This chain is L-rhamnose mutarotase (rhaM), found in Rhizobium leguminosarum bv. trifolii.